A 1475-amino-acid polypeptide reads, in one-letter code: Peroxidasin homolog (1475 aa).

Residues 1–23 (MAVRPTRRCLLALLLCFAWWAMA) form the signal peptide. Positions 24-60 (VVASKQGAGCPSRCLCFRTTVRCMHLLLEAVPAVAPQ) constitute an LRRNT domain. Cystine bridges form between C33–C39 and C37–C46. LRR repeat units lie at residues 58-81 (APQT…AFRR), 82-105 (LRSL…AFED), 107-129 (ENLK…AFKG), 130-153 (LASL…SFQH), 154-177 (LPKL…TFSQ), and 179-201 (ESMK…LWLA). Positions 189-241 (NALHCDCEILWLADLLKTYAQSGNAQAAATCEYPRRIQGRSVATITPEELNCE) constitute an LRRCT domain. Intrachain disulfides connect C193/C240, C195/C219, C264/C314, C360/C409, C451/C499, and C543/C591. Ig-like C2-type domains lie at 243-329 (PRIT…QEVT), 339-425 (PTFV…AFII), 430-517 (PQFT…LTVQ), and 518-607 (PRVT…MVLS). A glycan (N-linked (GlcNAc...) asparagine) is linked at N387. Residues 402-425 (SDSGEYTCFASNSVDSIHATAFII) form an LRR 7 repeat. 4 N-linked (GlcNAc...) asparagine glycosylation sites follow: N637, N696, N716, and N728. 4 disulfides stabilise this stretch: C720-C882, C729-C745, C844-C854, and C848-C872. D823 is a heme b binding site. Residue H824 is the Proton acceptor of the active site. D825 serves as a coordination point for Ca(2+). Ca(2+) is bound by residues T904, Y906, D908, and S910. An intrachain disulfide couples C956 to C967. An N-linked (GlcNAc...) asparagine glycan is attached at N961. Residues E977 and H1071 each contribute to the heme b site. One copy of the LRR 8 repeat lies at 1148–1172 (ALDLAAINIQRGRDHGIPPYHDYRV). Y1173 carries the phosphotyrosine modification. 2 disulfide bridges follow: C1174-C1231 and C1272-C1298. N1175 is a glycosylation site (N-linked (GlcNAc...) asparagine). S1177 bears the Phosphoserine mark. The stretch at 1267-1288 (LARILCDNSDNITRVQQDVFRV) is one LRR 9 repeat. 2 N-linked (GlcNAc...) asparagine glycosylation sites follow: N1277 and N1364. The segment at 1312 to 1407 (CCEDCRTRGQ…QINSLESRLS (96 aa)) is required in homotrimerization. The VWFC domain occupies 1409-1467 (TECVDDSGESHGGNTKWKKDPCTVCECKNGQITCFVEACQPAACPQPVKVEGACCPVCL).

Belongs to the peroxidase family. XPO subfamily. In terms of assembly, homotrimer; disulfide-linked. The homotrimer form is predominant. Homooligomer; disulfide-linked. Oligomerization occurs intracellularly before C-terminal proteolytic cleavage. Interacts with PXDNL; this interaction inhibits the peroxidase activity of PXDN. Ca(2+) serves as cofactor. Requires heme b as cofactor. In terms of processing, processed by FURIN and the proteolytic processing largely depends on the peroxidase activity of PXDN. The proteolytic cleavage occurs after intracellular homotrimerization and releases into the extracellular matrix a large, catalytically active fragment and a smaller fragment consisting primarily of the C-terminal VWFC domain. The processing enhances both peroxidase activity and sulfilimine cross-links formation. Highly expressed in the cardiovascular system. In the embryo, expressed in the corneal epithelial layer. In the adult eyes, expressed in the corneal and lens epithelium. Expressed in lung.

The protein resides in the secreted. Its subcellular location is the extracellular space. It is found in the extracellular matrix. The protein localises to the endoplasmic reticulum. It localises to the cell surface. The protein resides in the basement membrane. The enzyme catalyses L-lysyl-[collagen] + L-methionyl-[collagen] + H2O2 = [collagen]-L-lysyl-N-S-L-methionyl-[collagen] + 2 H2O + H(+). It carries out the reaction bromide + H2O2 = hypobromite + H2O. The catalysed reaction is L-lysyl-[collagen] + L-methionyl-[collagen] + hypobromite = [collagen]-L-lysyl-N-S-L-methionyl-[collagen] + bromide + H2O + H(+). It catalyses the reaction (5R)-5-hydroxy-L-lysyl-[collagen] + L-methionyl-[collagen] + hypobromite = [collagen]-(5R)-5-hydroxy-L-lysyl-N-S-L-methionyl-[collagen] + bromide + H2O + H(+). The enzyme catalyses (5R)-5-hydroxy-L-lysyl-[collagen] + L-methionyl-[collagen] + H2O2 = [collagen]-(5R)-5-hydroxy-L-lysyl-N-S-L-methionyl-[collagen] + 2 H2O + H(+). It carries out the reaction L-tyrosyl-[protein] + bromide + H2O2 + H(+) = 3-bromo-L-tyrosyl-[protein] + 2 H2O. The catalysed reaction is hypobromite + L-tyrosyl-[protein] + H(+) = 3-bromo-L-tyrosyl-[protein] + H2O. Its activity is regulated as follows. Thiocyanate inhibits the formation of 3-bromotyrosine. Functionally, catalyzes the two-electron oxidation of bromide by hydrogen peroxide and generates hypobromite as a reactive intermediate which mediates the formation of sulfilimine cross-links between methionine and hydroxylysine residues within an uncross-linked collagen IV/COL4A1 NC1 hexamer. In turns, directly contributes to the collagen IV network-dependent fibronectin/FN and laminin assembly, which is required for full extracellular matrix (ECM)-mediated signaling. Thus, sulfilimine cross-links are essential for growth factor-induced cell proliferation and survival in endothelial cells, an event essential to basement membrane integrity. In addition, through the bromide oxidation, may promote tubulogenesis and induce angiogenesis through ERK1/2, Akt, and FAK pathways. Moreover brominates alpha2 collagen IV chain/COL4A2 at 'Tyr-1480' and leads to bromine enrichment of the basement membranes. In vitro, can also catalyze the two-electron oxidation of thiocyanate and iodide and these two substrates could effectively compete with bromide and thus inhibit the formation of sulfilimine bonds. Binds laminins. May play a role in the organization of eyeball structure and lens development during eye development. The protein is Peroxidasin homolog of Mus musculus (Mouse).